The sequence spans 89 residues: Small ribosomal subunit protein uS15 (89 aa).

The protein belongs to the universal ribosomal protein uS15 family. As to quaternary structure, part of the 30S ribosomal subunit. Forms a bridge to the 50S subunit in the 70S ribosome, contacting the 23S rRNA.

Functionally, one of the primary rRNA binding proteins, it binds directly to 16S rRNA where it helps nucleate assembly of the platform of the 30S subunit by binding and bridging several RNA helices of the 16S rRNA. In terms of biological role, forms an intersubunit bridge (bridge B4) with the 23S rRNA of the 50S subunit in the ribosome. The protein is Small ribosomal subunit protein uS15 of Beijerinckia indica subsp. indica (strain ATCC 9039 / DSM 1715 / NCIMB 8712).